The primary structure comprises 342 residues: Nicotinate-nucleotide--dimethylbenzimidazole phosphoribosyltransferase (342 aa).

The Proton acceptor role is filled by E311.

It belongs to the CobT family.

The catalysed reaction is 5,6-dimethylbenzimidazole + nicotinate beta-D-ribonucleotide = alpha-ribazole 5'-phosphate + nicotinate + H(+). It functions in the pathway nucleoside biosynthesis; alpha-ribazole biosynthesis; alpha-ribazole from 5,6-dimethylbenzimidazole: step 1/2. Catalyzes the synthesis of alpha-ribazole-5'-phosphate from nicotinate mononucleotide (NAMN) and 5,6-dimethylbenzimidazole (DMB). This Shewanella sediminis (strain HAW-EB3) protein is Nicotinate-nucleotide--dimethylbenzimidazole phosphoribosyltransferase.